Here is an 833-residue protein sequence, read N- to C-terminus: Patatin-like phospholipase domain-containing protein SNOG_00918 (833 aa).

Disordered stretches follow at residues methionine 1–aspartate 20 and histidine 49–asparagine 71. The chain crosses the membrane as a helical span at residues tryptophan 108–threonine 128. Residues leucine 301–asparagine 457 form the PNPLA domain. The GXSXG motif lies at glycine 332 to glycine 336. Serine 334 functions as the Nucleophile in the catalytic mechanism. The active-site Proton acceptor is the aspartate 444. Disordered regions lie at residues threonine 630–proline 657 and leucine 680–leucine 833. The span at serine 644–serine 655 shows a compositional bias: low complexity. Polar residues predominate over residues aspartate 689–lysine 707. Basic and acidic residues-rich tracts occupy residues arginine 740–alanine 750, arginine 759–arginine 769, and aspartate 782–valine 794. Residues glutamate 809–glutamate 819 are compositionally biased toward acidic residues.

Belongs to the PLPL family.

The protein localises to the membrane. Probable lipid hydrolase. The protein is Patatin-like phospholipase domain-containing protein SNOG_00918 of Phaeosphaeria nodorum (strain SN15 / ATCC MYA-4574 / FGSC 10173) (Glume blotch fungus).